The sequence spans 85 residues: Putative septation protein SpoVG (85 aa).

It belongs to the SpoVG family.

In terms of biological role, could be involved in septation. The protein is Putative septation protein SpoVG of Archaeoglobus fulgidus (strain ATCC 49558 / DSM 4304 / JCM 9628 / NBRC 100126 / VC-16).